Here is a 394-residue protein sequence, read N- to C-terminus: Elongation factor Tu 2 (394 aa).

The tr-type G domain maps to 10–204; it reads KPHVNVGTIG…ALDSYIPQPE (195 aa). A G1 region spans residues 19–26; that stretch reads GHVDHGKT. 19 to 26 provides a ligand contact to GTP; the sequence is GHVDHGKT. Position 26 (threonine 26) interacts with Mg(2+). The G2 stretch occupies residues 60-64; that stretch reads GITIN. The G3 stretch occupies residues 81 to 84; that stretch reads DCPG. Residues 81 to 85 and 136 to 139 each bind GTP; these read DCPGH and NKCD. The G4 stretch occupies residues 136–139; the sequence is NKCD. Positions 174-176 are G5; sequence SAL.

It belongs to the TRAFAC class translation factor GTPase superfamily. Classic translation factor GTPase family. EF-Tu/EF-1A subfamily. In terms of assembly, monomer.

Its subcellular location is the cytoplasm. It catalyses the reaction GTP + H2O = GDP + phosphate + H(+). GTP hydrolase that promotes the GTP-dependent binding of aminoacyl-tRNA to the A-site of ribosomes during protein biosynthesis. The polypeptide is Elongation factor Tu 2 (Yersinia pestis bv. Antiqua (strain Antiqua)).